Here is a 167-residue protein sequence, read N- to C-terminus: Zymogen granule membrane protein 16 (167 aa).

The first 16 residues, Met1–Ala16, serve as a signal peptide directing secretion. Positions Ser24–Thr159 constitute a Jacalin-type lectin domain.

This sequence belongs to the jacalin lectin family.

Its subcellular location is the secreted. The protein resides in the extracellular space. It is found in the extracellular matrix. The protein localises to the zymogen granule lumen. It localises to the golgi apparatus lumen. In terms of biological role, may play a role in protein trafficking. May act as a linker molecule between the submembranous matrix on the luminal side of zymogen granule membrane (ZGM) and aggregated secretory proteins during granule formation in the TGN. The sequence is that of Zymogen granule membrane protein 16 (Zg16) from Mus musculus (Mouse).